Here is a 389-residue protein sequence, read N- to C-terminus: MLESTALFSATTIHLDRLMCAFNCMTPFGQRDDVLITIDRDGLTFIRQNNHAAEIQLFLAKELFQYYSIREGFEGEIQLCMKLNHLLDTVSVANRDKDDVVECTLSYDGEGTPFMLILEDSMITEQVEYATYLVGEMDRTGLELDRARLEFECILKGDVLYSALRDLREIGCKECYLYIVTSSRARPMFALVSRGQLGLSKIILPSERSVLEKLEVYENDSTTLIHDAPVIGLFDFAALDKLRPSTKIASKVLIRKDVHGLLAVNILSDTNAILVPEKRELIRASRSVSAEYPTVVIEVFLLEKASVGDIDVRDVHQLMLTSPAHRRSGFADSGSRIVSVTPTATSAAHTGAGSLLGLAPPSAFPAEETQDPDESYHPAPSNTDIPLFL.

The interval 358–389 (LAPPSAFPAEETQDPDESYHPAPSNTDIPLFL) is disordered. Residues 380–389 (PSNTDIPLFL) show a composition bias toward polar residues.

This sequence belongs to the rad1 family. Component of the checkpoint clamp complex composed of DDC1, MEC3 and RAD17.

It is found in the nucleus. Component of the checkpoint clamp complex involved in the surveillance mechanism that allows the DNA repair pathways to act to restore the integrity of the DNA prior to DNA synthesis or separation of the replicated chromosomes. The chain is DNA damage checkpoint control protein RAD17 (RAD17) from Eremothecium gossypii (strain ATCC 10895 / CBS 109.51 / FGSC 9923 / NRRL Y-1056) (Yeast).